We begin with the raw amino-acid sequence, 121 residues long: Large ribosomal subunit protein bL19 (121 aa).

It belongs to the bacterial ribosomal protein bL19 family.

Functionally, this protein is located at the 30S-50S ribosomal subunit interface and may play a role in the structure and function of the aminoacyl-tRNA binding site. In Amoebophilus asiaticus (strain 5a2), this protein is Large ribosomal subunit protein bL19.